The chain runs to 921 residues: 2-oxoadipate dehydrogenase complex component E1 (921 aa).

An N6-succinyllysine mark is found at K184 and K189. Residues 300-319 are disordered; the sequence is GKTRGRQQSREDGDYSPNGS. 2 positions are modified to N6-succinyllysine: K801 and K819.

The protein belongs to the alpha-ketoglutarate dehydrogenase family. In terms of assembly, the 2-oxoadipate dehydrogenase complex is composed of OADH (2-oxoadipate dehydrogenase; E1a), DLST (dihydrolipoamide succinyltransferase; E2) and DLD (dihydrolipoamide dehydrogenase; E3). E1a functional unit is a dimer. Thiamine diphosphate is required as a cofactor.

The protein localises to the mitochondrion. The enzyme catalyses N(6)-[(R)-lipoyl]-L-lysyl-[protein] + 2-oxoadipate + H(+) = N(6)-[(R)-S(8)-glutaryldihydrolipoyl]-L-lysyl-[protein] + CO2. It functions in the pathway amino-acid degradation. Its function is as follows. 2-oxoadipate dehydrogenase (E1a) component of the 2-oxoadipate dehydrogenase complex (OADHC). Participates in the first step, rate limiting for the overall conversion of 2-oxoadipate (alpha-ketoadipate) to glutaryl-CoA and CO(2) catalyzed by the whole OADHC. Catalyzes the irreversible decarboxylation of 2-oxoadipate via the thiamine diphosphate (ThDP) cofactor and subsequent transfer of the decarboxylated acyl intermediate on an oxidized dihydrolipoyl group that is covalently amidated to the E2 enzyme (dihydrolipoyllysine-residue succinyltransferase or DLST). Can catalyze the decarboxylation of 2-oxoglutarate in vitro, but at a much lower rate than 2-oxoadipate. Responsible for the last step of L-lysine, L-hydroxylysine and L-tryptophan catabolism with the common product being 2-oxoadipate. This chain is 2-oxoadipate dehydrogenase complex component E1 (Dhtkd1), found in Mus musculus (Mouse).